The following is a 506-amino-acid chain: Kynureninase 1 (506 aa).

Residues leucine 141, threonine 142, 169-172 (FPSD), aspartate 254, histidine 257, and tyrosine 279 contribute to the pyridoxal 5'-phosphate site. At lysine 280 the chain carries N6-(pyridoxal phosphate)lysine. The span at 303-319 (ETAPTTTPDGTNGNPKT) shows a compositional bias: low complexity. Positions 303–322 (ETAPTTTPDGTNGNPKTISD) are disordered. Pyridoxal 5'-phosphate-binding residues include tryptophan 334 and asparagine 362.

It belongs to the kynureninase family. As to quaternary structure, homodimer. Requires pyridoxal 5'-phosphate as cofactor.

It localises to the cytoplasm. The enzyme catalyses L-kynurenine + H2O = anthranilate + L-alanine + H(+). The catalysed reaction is 3-hydroxy-L-kynurenine + H2O = 3-hydroxyanthranilate + L-alanine + H(+). The protein operates within amino-acid degradation; L-kynurenine degradation; L-alanine and anthranilate from L-kynurenine: step 1/1. It functions in the pathway cofactor biosynthesis; NAD(+) biosynthesis; quinolinate from L-kynurenine: step 2/3. Functionally, catalyzes the cleavage of L-kynurenine (L-Kyn) and L-3-hydroxykynurenine (L-3OHKyn) into anthranilic acid (AA) and 3-hydroxyanthranilic acid (3-OHAA), respectively. This Phaeosphaeria nodorum (strain SN15 / ATCC MYA-4574 / FGSC 10173) (Glume blotch fungus) protein is Kynureninase 1.